A 256-amino-acid chain; its full sequence is Peroxisomal membrane protein PMP30B (256 aa).

This sequence belongs to the peroxin-11 family.

It is found in the peroxisome membrane. Involved in peroxisomal proliferation. Could participate in peroxisomal elongation or fission. May be involved in parceling of peroxisomes into regular quanta. This Candida boidinii (Yeast) protein is Peroxisomal membrane protein PMP30B (PEX11B).